The primary structure comprises 338 residues: uncharacterized protein (338 aa).

This is an uncharacterized protein from Acidianus filamentous virus 2 (isolate Italy/Pozzuoli) (AFV-2).